The following is a 2183-amino-acid chain: MGAQVSTQKTGAHETSLSATGNSIIHYTNINYYKDAASNSANRQDFTQDPSKFTEPVKDVMIKSLPALNSPTVEECGYSDRVRSITLGNSTITTQECANVVVGYGVWPDYLSDEEATAEDQPTQPDVATCRFYTLKSVKWEMQSAGWWWKFPDALSEMGLFGQNMQYHYLGRSGYTIHVQCNASKFHQGCLLVVCVPEAEMGCTNAENAPTYGDLCGGETAKQFEQNAVTGETAVQTAVCNAGMGVGVGNLTIYPHQWINLRTNNSATIVMPYINSVPMDNMFRHNNFTLMIIPFAPLDYVTGASSYIPITVTVAPMSAEYNGLRLAGHQGLPTMLTPGSTQFLTSDDFQSPSAMPQFDVTPEMNIPGQVRNLMEIAEVDSVVPINNLQANLKTMEAYRVQVRSTDEMGGQIFGFPLQPGASSVLQRTLLGEILNYYTHWSGSLKLTFVFCGSAMATGKFLLAYSPPGAGAPDSRKNAMLGTHVIWDVGLQSSCVLCVPWISQTHYRYVVDDKYTASGFISCWYQTNVIVPAEAQKSCYIMCFVSACNDFSVRMLRDTQFIKQDTFYQGPTEESVERAMGRVADTIARGPSNSEQIPALTAVETGHTSQVDPSDTMQTRHVHNYHSRSESSIENFLCRSACVIYIKYSSAESNNLKRYAEWVINTRQVAQLRRKMEMFTYIRCDMEQTFVITSHQEMSTATNSVVPVQTHQIMYVPPGGPVPTSVNDYVWQTSTNPSIFWTEGNAPPRMSIPFMSIGNAYTMFYDGWSNFSRDGIYGYNSLNNMGTIYARHVNDSSPGGLTSTIRIYFKPKHVKAYVRPPRRLCQYKKAKNVNFDVEAVTTERASLVTTGPHGQQSGAVYVGNYRVVNRHLATHFDWQNYIWEDYNRDLLVSTTTAHGCDTIARCQCTSGVYFCVSRNKHYPVVFEGPGLVEVQESEYYPKRYQSHVLLARGFSEPGDCGGILRCEHGVIGIRTMGREGVVGFADVRDLLWLEDDAMEQGVKDYVEELGNSFGSGFTNQICEQVNLLKESLVGQDSILEKSLKALVKIISALVIVVRNHDDLVTVTATLALIGCTTSPWRWLKRKVSQYYGIPMAERQNNNWLKKFTEMTNACKGMEWIAVKIQKFIEWLKVKILPEVKEKHEFLNRLKQLPLLESQIATIEQSAPSQSDQEQLFSNVQYFAHYCRKYAPLYAAEAKRVFSLEKKMSNYIQFKSKCRIEPVCLLLHGSPGAGKSVATNLIGRSLAEKLNSSVYSLPPDPDHFDGYKQQAVVIMDDLCQNPDGKDVSLFCQMVSSVDFVPPMAALEEKGILFTSPFVLASTNAGSINAPTVSDSRALARRFHFDMNIEVISMYSQNGKINMPMSVKTCDEECCPVNFKKCCPLVCGKAIQFIDRRTQVRYSLDMLVTEMFREYNHRHSVGATLEALFQGPPIYREIRISVAPETPPPPAIADLLRSVDSEAVREYCKEKGWLVPEISSTLQIEKHVSRAFICLQALTTFVSVAGIIYIIYKLFAGFQGAYTGMPNQKPKVPTFRQAKVQGPAFEFAVAMMKRNASTVKTEYGEFTMLGIYDRWAVLPRHAKPGPTILMNDQEVGVVDAKELVDKDGTTLELTLLKLNRNEKFRDIRGFLAREEAEVNEAVLAINTSKFPNMYIPVGQVTEYGFLNLGGTPTKRMLMYNFPTRAGQCGGVLMSTGKVLGIHVGGNGHQGFSASLLRHYFNDEQGEIEFIESSKEAGFPVINTPNKTKLEPSVFHHIFEGNKEPAVLRNGDTRLKVNFEEAIFSKYIGNVNTHVDEYMMEAVDHYAGQLATLDISTEPMRLEDAVYGTEGLEALDLTTSAGYPYVTLGIKKRDILSKKTKDLTKLKECMDKYGLNLPMVTYVKDELRSAEKVAKGKSRLIEASSLNDSVAMRQTFGNLYKTFHLNPGIVTGSAVGCDPDLFWSKIPVMLDGHLRAFDYSGYDASLSPVWFACLKLLLEKLGYSHKETNYIDYLCNSHHLYRDKHYFVRGGMPSGCSGTSIFNSMINNIIIRTLMFKVYKGIDLDQFRMIAYGDDVIASYPLPIDASLLAEAGKGYGLIMTPADKGECFNELTWTNVTFLKRYFRADEQYPFLVHPVMPIKDIHESIRWTKDPKNTQYHVRSLCLLAWHNGEQEYEELYPKIRSVPVGRCLTLPAFSTLRRKWLDAF.

The N-myristoyl glycine; by host moiety is linked to residue G2. At 2-1493 (GAQVSTQKTG…HVSRAFICLQ (1492 aa)) the chain is on the cytoplasmic side. The segment at 566–582 (FYQGPTEESVERAMGRV) is amphipathic alpha-helix. Active-site for protease 2A activity residues include H870 and D888. C905 and C907 together coordinate Zn(2+). The active-site For protease 2A activity is C959. Zn(2+) is bound by residues C965 and H967. The tract at residues 1099 to 1171 (NNNWLKKFTE…EQSAPSQSDQ (73 aa)) is membrane-binding. An oligomerization region spans residues 1099–1237 (NNNWLKKFTE…SPGAGKSVAT (139 aa)). Positions 1120 to 1124 (AVKIQ) are RNA-binding. The SF3 helicase domain maps to 1203 to 1359 (EKKMSNYIQF…SMYSQNGKIN (157 aa)). C1367, C1379, and C1384 together coordinate Zn(2+). Residues 1367-1384 (CDEECCPVNFKKCCPLVC) form a C4-type; degenerate zinc finger. Residues 1411–1418 (EYNHRHSV) are RNA-binding. The oligomerization stretch occupies residues 1422–1427 (LEALFQ). Residues 1494 to 1509 (ALTTFVSVAGIIYIIY) lie within the membrane without spanning it. Residues 1510 to 2183 (KLFAGFQGAY…TLRRKWLDAF (674 aa)) lie on the Cytoplasmic side of the membrane. Residue Y1519 is modified to O-(5'-phospho-RNA)-tyrosine. The 179-residue stretch at 1539-1717 (GPAFEFAVAM…FSASLLRHYF (179 aa)) folds into the Peptidase C3 domain. Residues H1578, E1609, and C1685 each act as for protease 3C activity in the active site. Positions 1948-2064 (GHLRAFDYSG…SYPLPIDASL (117 aa)) constitute a RdRp catalytic domain. The Mg(2+) site is built by D1954 and D2050.

It belongs to the picornaviruses polyprotein family. As to quaternary structure, interacts with capsid protein VP1 and capsid protein VP3 to form heterotrimeric protomers. Interacts with capsid protein VP0, and capsid protein VP3 to form heterotrimeric protomers. Five protomers subsequently associate to form pentamers which serve as building blocks for the capsid. Interacts with capsid protein VP2, capsid protein VP3 and capsid protein VP4 following cleavage of capsid protein VP0. Interacts with host CXADR. In terms of assembly, interacts with capsid protein VP1 and capsid protein VP3 in the mature capsid. As to quaternary structure, interacts with capsid protein VP0 and capsid protein VP1 to form heterotrimeric protomers. Five protomers subsequently associate to form pentamers which serve as building blocks for the capsid. Interacts with capsid protein VP4 in the mature capsid. Interacts with protein 2C; this interaction may be important for virion morphogenesis. Interacts with capsid protein VP1 and capsid protein VP3. In terms of assembly, homodimer. As to quaternary structure, homohexamer; forms a hexameric ring structure with 6-fold symmetry characteristic of AAA+ ATPases. Interacts (via N-terminus) with host RTN3 (via reticulon domain); this interaction is important for viral replication. Interacts with capsid protein VP3; this interaction may be important for virion morphogenesis. Interacts with protein 3CD. In terms of assembly, homodimer. Interacts with host GBF1. Interacts (via GOLD domain) with host ACBD3 (via GOLD domain); this interaction allows the formation of a viral protein 3A/ACBD3 heterotetramer with a 2:2 stoichiometry, which will stimulate the recruitment of host PI4KB in order to synthesize PI4P at the viral RNA replication sites. As to quaternary structure, interacts with RNA-directed RNA polymerase. Interacts with protein 3AB and with RNA-directed RNA polymerase. In terms of assembly, interacts with Viral protein genome-linked and with protein 3CD. It depends on Mg(2+) as a cofactor. Specific enzymatic cleavages in vivo by the viral proteases yield processing intermediates and the mature proteins. Post-translationally, myristoylation is required for the formation of pentamers during virus assembly. Further assembly of 12 pentamers and a molecule of genomic RNA generates the provirion. In terms of processing, during virion maturation, immature virions are rendered infectious following cleavage of VP0 into VP4 and VP2. This maturation seems to be an autocatalytic event triggered by the presence of RNA in the capsid and it is followed by a conformational change infectious virion. Myristoylation is required during RNA encapsidation and formation of the mature virus particle. Post-translationally, VPg is uridylylated by the polymerase into VPg-pUpU. This acts as a nucleotide-peptide primer for the genomic RNA replication.

It is found in the virion. It localises to the host cytoplasm. The protein resides in the host cytoplasmic vesicle membrane. The protein localises to the host nucleus. The enzyme catalyses a ribonucleoside 5'-triphosphate + H2O = a ribonucleoside 5'-diphosphate + phosphate + H(+). The catalysed reaction is Selective cleavage of Tyr-|-Gly bond in the picornavirus polyprotein.. It carries out the reaction RNA(n) + a ribonucleoside 5'-triphosphate = RNA(n+1) + diphosphate. It catalyses the reaction Selective cleavage of Gln-|-Gly bond in the poliovirus polyprotein. In other picornavirus reactions Glu may be substituted for Gln, and Ser or Thr for Gly.. Replication or transcription is subject to high level of random mutations by the nucleotide analog ribavirin. Forms an icosahedral capsid of pseudo T=3 symmetry with capsid proteins VP2 and VP3. The capsid is 300 Angstroms in diameter, composed of 60 copies of each capsid protein and enclosing the viral positive strand RNA genome. Capsid protein VP1 mainly forms the vertices of the capsid. Capsid protein VP1 interacts with host CXADR to provide virion attachment to target host cells. This attachment induces virion internalization. Tyrosine kinases are probably involved in the entry process. After binding to its receptor, the capsid undergoes conformational changes. Capsid protein VP1 N-terminus (that contains an amphipathic alpha-helix) and capsid protein VP4 are externalized. Together, they shape a pore in the host membrane through which viral genome is translocated to host cell cytoplasm. Its function is as follows. Forms an icosahedral capsid of pseudo T=3 symmetry with capsid proteins VP2 and VP3. The capsid is 300 Angstroms in diameter, composed of 60 copies of each capsid protein and enclosing the viral positive strand RNA genome. Functionally, lies on the inner surface of the capsid shell. After binding to the host receptor, the capsid undergoes conformational changes. Capsid protein VP4 is released, Capsid protein VP1 N-terminus is externalized, and together, they shape a pore in the host membrane through which the viral genome is translocated into the host cell cytoplasm. In terms of biological role, component of immature procapsids, which is cleaved into capsid proteins VP4 and VP2 after maturation. Allows the capsid to remain inactive before the maturation step. Cysteine protease that cleaves viral polyprotein and specific host proteins. It is responsible for the autocatalytic cleavage between the P1 and P2 regions, which is the first cleavage occurring in the polyprotein. Also cleaves the host translation initiation factor EIF4G1, in order to shut down the capped cellular mRNA translation. Inhibits the host nucleus-cytoplasm protein and RNA trafficking by cleaving host members of the nuclear pores. Counteracts stress granule formation probably by antagonizing its assembly or promoting its dissassembly. Cleaves and inhibits host IFIH1/MDA5, thereby inhibiting the type-I IFN production and the establishment of the antiviral state. Cleaves and inhibits host MAVS, thereby inhibiting the type-I IFN production and the establishment of the antiviral state. Its function is as follows. Plays an essential role in the virus replication cycle by acting as a viroporin. Creates a pore in the host endoplasmic reticulum and as a consequence releases Ca2+ in the cytoplasm of infected cell. In turn, high levels of cytoplasmic calcium may trigger membrane trafficking and transport of viral ER-associated proteins to viroplasms, sites of viral genome replication. Functionally, induces and associates with structural rearrangements of intracellular membranes. Displays RNA-binding, nucleotide binding and NTPase activities. May play a role in virion morphogenesis and viral RNA encapsidation by interacting with the capsid protein VP3. In terms of biological role, localizes the viral replication complex to the surface of membranous vesicles. Together with protein 3CD binds the Cis-Active RNA Element (CRE) which is involved in RNA synthesis initiation. Acts as a cofactor to stimulate the activity of 3D polymerase, maybe through a nucleid acid chaperone activity. Localizes the viral replication complex to the surface of membranous vesicles. It inhibits host cell endoplasmic reticulum-to-Golgi apparatus transport and causes the disassembly of the Golgi complex, possibly through GBF1 interaction. This would result in depletion of MHC, trail receptors and IFN receptors at the host cell surface. Plays an essential role in viral RNA replication by recruiting ACBD3 and PI4KB at the viral replication sites, thereby allowing the formation of the rearranged membranous structures where viral replication takes place. Its function is as follows. Acts as a primer for viral RNA replication and remains covalently bound to viral genomic RNA. VPg is uridylylated prior to priming replication into VPg-pUpU. The oriI viral genomic sequence may act as a template for this. The VPg-pUpU is then used as primer on the genomic RNA poly(A) by the RNA-dependent RNA polymerase to replicate the viral genome. During genome replication, the VPg-RNA linkage is removed by the host TDP2, thereby accelerating replication. During the late stage of the replication cycle, host TDP2 is excluded from sites of viral RNA synthesis and encapsidation, allowing for the generation of progeny virions. Functionally, involved in the viral replication complex and viral polypeptide maturation. It exhibits protease activity with a specificity and catalytic efficiency that is different from protease 3C. Protein 3CD lacks polymerase activity. Protein 3CD binds to the 5'UTR of the viral genome. In terms of biological role, replicates the viral genomic RNA on the surface of intracellular membranes. May form linear arrays of subunits that propagate along a strong head-to-tail interaction called interface-I. Covalently attaches UMP to a tyrosine of VPg, which is used to prime RNA synthesis. The positive stranded RNA genome is first replicated at virus induced membranous vesicles, creating a dsRNA genomic replication form. This dsRNA is then used as template to synthesize positive stranded RNA genomes. ss(+)RNA genomes are either translated, replicated or encapsidated. Major viral protease that mediates proteolytic processing of the polyprotein. Cleaves host EIF5B, contributing to host translation shutoff. Also cleaves host PABPC1, contributing to host translation shutoff. Cleaves host NLRP1, triggers host N-glycine-mediated degradation of the autoinhibitory NLRP1 N-terminal fragment. The sequence is that of Genome polyprotein from Coxsackievirus B4 (strain E2).